The following is a 179-amino-acid chain: MPRRRVIGQRKILPDPKFGSELLAKFVNILMVDGKKSTAESIVYSALETLAQRSGKSELEAFEVALENVRPTVEVKSRRVGGSTYQVPVEVRPVRRNALAMRWIVEAARKRGDKSMALRLANELSDAAENKGTAVKKREDVHRMAEANKAFAHYRWKSLRSFSHQAGASSKQPALGYLN.

This sequence belongs to the universal ribosomal protein uS7 family. In terms of assembly, part of the 30S ribosomal subunit. Contacts proteins S9 and S11.

One of the primary rRNA binding proteins, it binds directly to 16S rRNA where it nucleates assembly of the head domain of the 30S subunit. Is located at the subunit interface close to the decoding center, probably blocks exit of the E-site tRNA. This chain is Small ribosomal subunit protein uS7, found in Shigella flexneri serotype 5b (strain 8401).